A 334-amino-acid polypeptide reads, in one-letter code: Tyrosine-protein kinase SRK3 (334 aa).

The 42-residue stretch at 1 to 42 folds into the SH2 domain; it reads IRTLDDGGFYMANRISFPTLQNLVSHYMMDADGLAQRLSRPC. The Protein kinase domain maps to 66–321; the sequence is IQLQRKLGQG…LKNLLEDYYV (256 aa). ATP is bound by residues 72 to 80 and Lys-94; that span reads LGQGNFGEV. Asp-186 (proton acceptor) is an active-site residue.

This sequence belongs to the protein kinase superfamily. Tyr protein kinase family.

Its subcellular location is the cytoplasm. The enzyme catalyses L-tyrosyl-[protein] + ATP = O-phospho-L-tyrosyl-[protein] + ADP + H(+). This Spongilla lacustris (Freshwater sponge) protein is Tyrosine-protein kinase SRK3 (SRK3).